The primary structure comprises 822 residues: Pentatricopeptide repeat-containing protein At2g41720 (822 aa).

A disordered region spans residues 1–28 (MATVTNFKLVTPPESSRADKPGATKASD). 19 PPR repeats span residues 106–136 (ARKN…MKIQ), 142–176 (RNDI…SCKP), 177–211 (DAET…AIAP), 212–246 (SRST…GVGP), 247–281 (DLVT…KVRP), 282–316 (DTTT…RAEC), 319–353 (DVVT…GLKP), 354–388 (NIVS…GIIP), 389–423 (DVVS…RRKP), 424–458 (NVVT…GIKP), 459–493 (NVVS…GINL), 494–528 (NTAA…KVKA), 529–563 (DSVT…SIPL), 564–598 (TKEV…GCEP), 599–633 (DVIA…GIEP), 634–668 (DSIA…EIPF), 669–699 (TGAV…MDPY), 704–738 (SIGL…GVGI), and 739–773 (NLKT…GIQP).

It belongs to the PPR family. P subfamily.

The chain is Pentatricopeptide repeat-containing protein At2g41720 (EMB2654) from Arabidopsis thaliana (Mouse-ear cress).